The primary structure comprises 352 residues: GTPase Obg (352 aa).

The Obg domain occupies 1–159 (MHFLDQAKIF…MYVWLRLKLL (159 aa)). A disordered region spans residues 122–142 (DGGRGNASYKTSTNRAPRQHG). In terms of domain architecture, OBG-type G spans 160 to 328 (ADAGLVGLPN…LLDAVLEYLP (169 aa)). Residues 166–173 (GLPNAGKS), 191–195 (FTTLR), 212–215 (DIPG), 280–283 (NKID), and 309–311 (SGA) contribute to the GTP site. The Mg(2+) site is built by Ser173 and Thr193.

Belongs to the TRAFAC class OBG-HflX-like GTPase superfamily. OBG GTPase family. Monomer. The cofactor is Mg(2+).

It localises to the cytoplasm. Its function is as follows. An essential GTPase which binds GTP, GDP and possibly (p)ppGpp with moderate affinity, with high nucleotide exchange rates and a fairly low GTP hydrolysis rate. Plays a role in control of the cell cycle, stress response, ribosome biogenesis and in those bacteria that undergo differentiation, in morphogenesis control. This chain is GTPase Obg, found in Novosphingobium aromaticivorans (strain ATCC 700278 / DSM 12444 / CCUG 56034 / CIP 105152 / NBRC 16084 / F199).